Consider the following 366-residue polypeptide: Protein RecA (366 aa).

An ATP-binding site is contributed by 77–84 (GPESSGKT). A disordered region spans residues 346 to 366 (IGGPGGEDDDAGGAAGVGDEA).

The protein belongs to the RecA family.

Its subcellular location is the cytoplasm. Functionally, can catalyze the hydrolysis of ATP in the presence of single-stranded DNA, the ATP-dependent uptake of single-stranded DNA by duplex DNA, and the ATP-dependent hybridization of homologous single-stranded DNAs. It interacts with LexA causing its activation and leading to its autocatalytic cleavage. The polypeptide is Protein RecA (Rhodospirillum rubrum (strain ATCC 11170 / ATH 1.1.1 / DSM 467 / LMG 4362 / NCIMB 8255 / S1)).